Here is a 309-residue protein sequence, read N- to C-terminus: Aspartate carbamoyltransferase catalytic subunit (309 aa).

Carbamoyl phosphate contacts are provided by Arg-54 and Thr-55. Lys-82 contacts L-aspartate. Positions 104, 132, and 135 each coordinate carbamoyl phosphate. L-aspartate-binding residues include Arg-165 and Arg-219. Carbamoyl phosphate is bound by residues Gly-260 and Pro-261.

It belongs to the aspartate/ornithine carbamoyltransferase superfamily. ATCase family. As to quaternary structure, heterododecamer (2C3:3R2) of six catalytic PyrB chains organized as two trimers (C3), and six regulatory PyrI chains organized as three dimers (R2).

The catalysed reaction is carbamoyl phosphate + L-aspartate = N-carbamoyl-L-aspartate + phosphate + H(+). Its pathway is pyrimidine metabolism; UMP biosynthesis via de novo pathway; (S)-dihydroorotate from bicarbonate: step 2/3. In terms of biological role, catalyzes the condensation of carbamoyl phosphate and aspartate to form carbamoyl aspartate and inorganic phosphate, the committed step in the de novo pyrimidine nucleotide biosynthesis pathway. This Parafrankia sp. (strain EAN1pec) protein is Aspartate carbamoyltransferase catalytic subunit.